The chain runs to 510 residues: NEDD8-activating enzyme E1 regulatory subunit (510 aa).

At Ala-2 the chain carries N-acetylalanine. N6-acetyllysine occurs at positions 6 and 317. Residues Asp-307 to Asn-320 form an interaction with UBA3 region.

Belongs to the ubiquitin-activating E1 family. ULA1 subfamily. As to quaternary structure, heterodimer of UBA3 and NAE1. The complex binds NEDD8 and UBE2M. Binds APP and TP53BP2. Post-translationally, ubiquitinated by TRIP12, leading to its degradation by the proteasome.

It localises to the cell membrane. It participates in protein modification; protein neddylation. With respect to regulation, binding of TP53BP2 to the regulatory subunit NAE1 decreases neddylation activity. Regulatory subunit of the dimeric UBA3-NAE1 E1 enzyme. E1 activates NEDD8 by first adenylating its C-terminal glycine residue with ATP, thereafter linking this residue to the side chain of the catalytic cysteine, yielding a NEDD8-UBA3 thioester and free AMP. E1 finally transfers NEDD8 to the catalytic cysteine of UBE2M. Necessary for cell cycle progression through the S-M checkpoint. Overexpression of NAE1 causes apoptosis through deregulation of NEDD8 conjugation. The covalent attachment of NEDD8 to target proteins is known as 'neddylation' and the process is involved in the regulation of cell growth, viability and development. In Macaca fascicularis (Crab-eating macaque), this protein is NEDD8-activating enzyme E1 regulatory subunit (NAE1).